Consider the following 557-residue polypeptide: Chaperonin GroEL 1 (557 aa).

ATP is bound by residues T29 to P32, K50, D86 to T90, G416, and D495.

This sequence belongs to the chaperonin (HSP60) family. Forms a cylinder of 14 subunits composed of two heptameric rings stacked back-to-back. Interacts with the co-chaperonin GroES.

The protein localises to the cytoplasm. The catalysed reaction is ATP + H2O + a folded polypeptide = ADP + phosphate + an unfolded polypeptide.. Together with its co-chaperonin GroES, plays an essential role in assisting protein folding. The GroEL-GroES system forms a nano-cage that allows encapsulation of the non-native substrate proteins and provides a physical environment optimized to promote and accelerate protein folding. The polypeptide is Chaperonin GroEL 1 (Protochlamydia amoebophila (strain UWE25)).